Here is a 388-residue protein sequence, read N- to C-terminus: Major fimbrium subunit FimA type-4 (388 aa).

The first 18 residues, 1 to 18, serve as a signal peptide directing secretion; it reads MKKTKFFLLGLAALAMTA. Cys-19 is lipidated: N-palmitoyl cysteine. Cys-19 is lipidated: S-diacylglycerol cysteine. The propeptide occupies 19 to 45; it reads CNKDNEAEPVVETNATVSFIIKSGESR. The tract at residues 379-388 is important for oligomerization and fimbrium assembly; sequence WVVVNQAATW.

Belongs to the bacteroidetes fimbrillin superfamily. FimA/Mfa1 family. In terms of assembly, fimbriae are composed of a major, structural subunit (FimA) and the minor components FimC, FimD and FimE. Head-to-tail oligomerization of FimA molecules mediates assembly of the fimbrium stalk, while the minor components probably form the fimbrium tip. Linear, head-to-tail oligomerization of FimA is mediated by a conformation change, facilitating the insertion of a C-terminal beta-strand into a groove in the N-terminal domain of the following subunit. The anchoring subunit FimB limits fimbrium length and is important for solid fimbrium attachment to the outer membrane. In its absence, the major fimbriae become very long and are easily detached from the membrane. In terms of processing, synthesized as palmitoylated precursor. Efficient export to the outer membrane and integration into fimbriae requires lipidation and subsequent proteolytic removal of the lipidated propeptide.

The protein localises to the fimbrium. It is found in the cell outer membrane. In terms of biological role, structural subunit of the major fimbriae. These long, filamentous pili are attached to the cell surface; they mediate biofilm formation, adhesion onto host cells and onto other bacteria that are part of the oral microbiome. They play an important role in the invasion of periodontal tissues. Fimbriae and their constituents are major virulence factors. FimA proteins from different strains have highly divergent sequences, and this has been used for classification. The sequence-based classification correlates with pathogenicity. The sequence is that of Major fimbrium subunit FimA type-4 (fimA) from Porphyromonas gingivalis (strain ATCC BAA-308 / W83).